We begin with the raw amino-acid sequence, 176 residues long: Inorganic pyrophosphatase (176 aa).

Substrate-binding residues include Lys-30, Arg-44, and Tyr-56. Asp-66, Asp-71, and Asp-103 together coordinate Mg(2+). Tyr-142 contributes to the substrate binding site.

It belongs to the PPase family. Homohexamer. It depends on Mg(2+) as a cofactor.

The protein resides in the cytoplasm. It catalyses the reaction diphosphate + H2O = 2 phosphate + H(+). In terms of biological role, catalyzes the hydrolysis of inorganic pyrophosphate (PPi) forming two phosphate ions. This is Inorganic pyrophosphatase from Vibrio cholerae serotype O1 (strain ATCC 39315 / El Tor Inaba N16961).